Consider the following 392-residue polypeptide: Proteasome-activating nucleotidase (392 aa).

A coiled-coil region spans residues 19 to 53 (IVRLLEEKIESLTKELEKLRQDLNWYKGELEKLLA). Residues 178-183 (GTGKTL) and Tyr317 contribute to the ATP site. A docks into pockets in the proteasome alpha-ring to cause gate opening region spans residues 390 to 392 (KYV).

It belongs to the AAA ATPase family. Homohexamer. The hexameric complex has a two-ring architecture resembling a top hat that caps the 20S proteasome core at one or both ends. Upon ATP-binding, the C-terminus of PAN interacts with the alpha-rings of the proteasome core by binding to the intersubunit pockets.

Its subcellular location is the cytoplasm. ATPase which is responsible for recognizing, binding, unfolding and translocation of substrate proteins into the archaeal 20S proteasome core particle. Is essential for opening the gate of the 20S proteasome via an interaction with its C-terminus, thereby allowing substrate entry and access to the site of proteolysis. Thus, the C-termini of the proteasomal ATPase function like a 'key in a lock' to induce gate opening and therefore regulate proteolysis. Unfolding activity requires energy from ATP hydrolysis, whereas ATP binding alone promotes ATPase-20S proteasome association which triggers gate opening, and supports translocation of unfolded substrates. The chain is Proteasome-activating nucleotidase from Sulfurisphaera tokodaii (strain DSM 16993 / JCM 10545 / NBRC 100140 / 7) (Sulfolobus tokodaii).